A 63-amino-acid chain; its full sequence is Lantipeptide Flvbeta.a (63 aa).

A propeptide spans Met-1 to Ala-28 (cleaved by FlvT). 2,3-didehydrobutyrine; by FlvM2 occurs at positions 30, 33, 38, and 39. Residues Ser-43 to Cys-49 constitute a cross-link (lanthionine (Ser-Cys); by FlvM2). 2 positions are modified to 2,3-didehydrobutyrine; by FlvM2: Thr-54 and Thr-55.

Post-translationally, maturation of FlvA2 peptides involves the enzymatic conversion of Thr, and Ser into dehydrated AA and the formation of thioether bonds with cysteines. Modifications are processed by the flavecin synthetase FlvM2. This is followed by membrane translocation and cleavage of the modified precursor. In terms of processing, contains DL-lanthionine, when coepressed in E.coli with the flavecin synthetase FlvM2.

The protein resides in the secreted. In terms of biological role, lanthionine-containing peptide that does probably not show antibacterial activity, since its analog [+3]Flvbeta.a does not show antibacterial activity against M.luteus. Also does not show antibiotic activity when tested with [Del2]Flvalpha.a, an analog of Flvalpha.a, which is encoded by the same operon than Flvbeta.a. The bactericidal activity of lantibiotics is based on depolarization of energized bacterial cytoplasmic membranes, initiated by the formation of aqueous transmembrane pores. In Ruminococcus flavefaciens, this protein is Lantipeptide Flvbeta.a.